We begin with the raw amino-acid sequence, 184 residues long: Guanylate kinase (184 aa).

Residues 5 to 183 enclose the Guanylate kinase-like domain; sequence KKLIIITGPS…TVKEVLKIIK (179 aa). Residue 12-19 participates in ATP binding; sequence GPSGVGKG.

It belongs to the guanylate kinase family.

The protein localises to the cytoplasm. It carries out the reaction GMP + ATP = GDP + ADP. Functionally, essential for recycling GMP and indirectly, cGMP. In Prochlorococcus marinus subsp. pastoris (strain CCMP1986 / NIES-2087 / MED4), this protein is Guanylate kinase.